A 290-amino-acid chain; its full sequence is 4-hydroxy-3-methylbut-2-enyl diphosphate reductase (290 aa).

Cys-13 lines the [4Fe-4S] cluster pocket. The (2E)-4-hydroxy-3-methylbut-2-enyl diphosphate site is built by His-41 and His-75. His-41 and His-75 together coordinate dimethylallyl diphosphate. Isopentenyl diphosphate is bound by residues His-41 and His-75. Residue Cys-97 coordinates [4Fe-4S] cluster. A (2E)-4-hydroxy-3-methylbut-2-enyl diphosphate-binding site is contributed by His-129. His-129 contacts dimethylallyl diphosphate. His-129 contacts isopentenyl diphosphate. The Proton donor role is filled by Glu-131. A (2E)-4-hydroxy-3-methylbut-2-enyl diphosphate-binding site is contributed by Thr-167. Residue Cys-198 participates in [4Fe-4S] cluster binding. Ser-226, Ser-227, Asn-228, and Ser-270 together coordinate (2E)-4-hydroxy-3-methylbut-2-enyl diphosphate. Dimethylallyl diphosphate is bound by residues Ser-226, Ser-227, Asn-228, and Ser-270. Isopentenyl diphosphate contacts are provided by Ser-226, Ser-227, Asn-228, and Ser-270.

This sequence belongs to the IspH family. [4Fe-4S] cluster is required as a cofactor.

The catalysed reaction is isopentenyl diphosphate + 2 oxidized [2Fe-2S]-[ferredoxin] + H2O = (2E)-4-hydroxy-3-methylbut-2-enyl diphosphate + 2 reduced [2Fe-2S]-[ferredoxin] + 2 H(+). The enzyme catalyses dimethylallyl diphosphate + 2 oxidized [2Fe-2S]-[ferredoxin] + H2O = (2E)-4-hydroxy-3-methylbut-2-enyl diphosphate + 2 reduced [2Fe-2S]-[ferredoxin] + 2 H(+). Its pathway is isoprenoid biosynthesis; dimethylallyl diphosphate biosynthesis; dimethylallyl diphosphate from (2E)-4-hydroxy-3-methylbutenyl diphosphate: step 1/1. The protein operates within isoprenoid biosynthesis; isopentenyl diphosphate biosynthesis via DXP pathway; isopentenyl diphosphate from 1-deoxy-D-xylulose 5-phosphate: step 6/6. In terms of biological role, catalyzes the conversion of 1-hydroxy-2-methyl-2-(E)-butenyl 4-diphosphate (HMBPP) into a mixture of isopentenyl diphosphate (IPP) and dimethylallyl diphosphate (DMAPP). Acts in the terminal step of the DOXP/MEP pathway for isoprenoid precursor biosynthesis. The sequence is that of 4-hydroxy-3-methylbut-2-enyl diphosphate reductase from Parabacteroides distasonis (strain ATCC 8503 / DSM 20701 / CIP 104284 / JCM 5825 / NCTC 11152).